A 119-amino-acid chain; its full sequence is Large ribosomal subunit protein bL20 (119 aa).

This sequence belongs to the bacterial ribosomal protein bL20 family.

Its function is as follows. Binds directly to 23S ribosomal RNA and is necessary for the in vitro assembly process of the 50S ribosomal subunit. It is not involved in the protein synthesizing functions of that subunit. The sequence is that of Large ribosomal subunit protein bL20 from Rhodopseudomonas palustris (strain BisB5).